Reading from the N-terminus, the 1076-residue chain is Isoleucine--tRNA ligase (1076 aa).

Residues 47–57 (PYTTGQIHLGT) carry the 'HIGH' region motif. A 'KMSKS' region motif is present at residues 591–595 (KMSKS). Lysine 594 serves as a coordination point for ATP.

It belongs to the class-I aminoacyl-tRNA synthetase family. IleS type 2 subfamily. In terms of assembly, monomer. Zn(2+) is required as a cofactor.

It localises to the cytoplasm. The enzyme catalyses tRNA(Ile) + L-isoleucine + ATP = L-isoleucyl-tRNA(Ile) + AMP + diphosphate. Catalyzes the attachment of isoleucine to tRNA(Ile). As IleRS can inadvertently accommodate and process structurally similar amino acids such as valine, to avoid such errors it has two additional distinct tRNA(Ile)-dependent editing activities. One activity is designated as 'pretransfer' editing and involves the hydrolysis of activated Val-AMP. The other activity is designated 'posttransfer' editing and involves deacylation of mischarged Val-tRNA(Ile). This is Isoleucine--tRNA ligase from Methanoregula boonei (strain DSM 21154 / JCM 14090 / 6A8).